Consider the following 226-residue polypeptide: uncharacterized protein (226 aa).

Residues 168–226 (ISALRNKLGLTQTDLGKRINVDANVIRNIETGDLVAFNVQDPMVRSLAYALGIRTIKYQ) enclose the HTH cro/C1-type domain. Positions 179–198 (QTDLGKRINVDANVIRNIET) form a DNA-binding region, H-T-H motif.

This is an uncharacterized protein from Acanthamoeba polyphaga mimivirus (APMV).